Consider the following 325-residue polypeptide: Beta-ketoacyl-[acyl-carrier-protein] synthase III (325 aa).

Residues C116 and H252 contribute to the active site. Positions 253–257 (QANLR) are ACP-binding. The active site involves N282.

Belongs to the thiolase-like superfamily. FabH family. In terms of assembly, homodimer.

It is found in the cytoplasm. The catalysed reaction is malonyl-[ACP] + acetyl-CoA + H(+) = 3-oxobutanoyl-[ACP] + CO2 + CoA. The protein operates within lipid metabolism; fatty acid biosynthesis. In terms of biological role, catalyzes the condensation reaction of fatty acid synthesis by the addition to an acyl acceptor of two carbons from malonyl-ACP. Catalyzes the first condensation reaction which initiates fatty acid synthesis and may therefore play a role in governing the total rate of fatty acid production. Possesses both acetoacetyl-ACP synthase and acetyl transacylase activities. Its substrate specificity determines the biosynthesis of branched-chain and/or straight-chain of fatty acids. The polypeptide is Beta-ketoacyl-[acyl-carrier-protein] synthase III (Xanthomonas euvesicatoria pv. vesicatoria (strain 85-10) (Xanthomonas campestris pv. vesicatoria)).